We begin with the raw amino-acid sequence, 115 residues long: MTDTIVNVQGSFFSASASGVADTESLLIDPQDAKFGAIEIHNIAHGGSVDVELLTSSDDTELVEDAAVTLDSFTGEGISQGNQIEASDNTNTYIRITNTSGGAIDIIATGREVSQ.

This chain is Gp30, found in Haloferax tailed virus 1 (HFTV1).